Reading from the N-terminus, the 31-residue chain is Cliotide T14 (31 aa).

A cross-link (cyclopeptide (Asp-Asn)) is located at residues 1-31; the sequence is DTIPCGESCVWIPCISSILGCSCKDKVCYHN. 3 disulfide bridges follow: Cys-5/Cys-21, Cys-9/Cys-23, and Cys-14/Cys-28.

Post-translationally, contains 3 disulfide bonds. This is a cyclic peptide. As to expression, expressed in seed but not in root nodules.

Probably participates in a plant defense mechanism. Not active against Gram-negative bacterium E.coli ATCC 700926 or Gram-positive bacterium S.aureus ATCC 12600 up to a concentration of 100 uM under low-salt conditions. This is Cliotide T14 from Clitoria ternatea (Butterfly pea).